Reading from the N-terminus, the 365-residue chain is 25S rRNA (uridine(2843)-N(3))-methyltransferase (365 aa).

Belongs to the class I-like SAM-binding methyltransferase superfamily.

Its subcellular location is the cytoplasm. The protein localises to the nucleus. It carries out the reaction uridine(2843) in 25S rRNA + S-adenosyl-L-methionine = N(3)-methyluridine(2843) in 25S rRNA + S-adenosyl-L-homocysteine + H(+). In terms of biological role, S-adenosyl-L-methionine-dependent methyltransferase that specifically methylates the N(3) position of uridine 2843 (m3U2843) in 25S rRNA. In Saccharomyces cerevisiae (strain ATCC 204508 / S288c) (Baker's yeast), this protein is 25S rRNA (uridine(2843)-N(3))-methyltransferase (BMT6).